A 762-amino-acid chain; its full sequence is Phospholipase D alpha 4 (762 aa).

Positions 1 to 116 (MELEEQKKYF…VINGFFPLIA (116 aa)) constitute a C2 domain. Position 172 (D172) interacts with Ca(2+). In terms of domain architecture, PLD phosphodiesterase 1 spans 301–339 (TAFAHHQKTITLDTRVTNSSTKEREIMSFLGGFDLCDGR). Active-site residues include H306, K308, and D313. H306 contributes to the a 1,2-diacyl-sn-glycero-3-phosphate binding site. Ca(2+) is bound by residues H345 and H377. A 1,2-diacyl-sn-glycero-3-phosphate-binding residues include Q477 and H615. The 28-residue stretch at 610 to 637 (FMVYVHSKLMIVDDTYILIGSANINQRS) folds into the PLD phosphodiesterase 2 domain. Catalysis depends on residues H615, K617, and D622. Residue E671 coordinates Ca(2+).

The protein belongs to the phospholipase D family. C2-PLD subfamily. It depends on Ca(2+) as a cofactor. Expressed in roots, leaves, stems, siliques,flowers and inflorescences.

The protein resides in the cell membrane. The enzyme catalyses a 1,2-diacyl-sn-glycero-3-phosphocholine + H2O = a 1,2-diacyl-sn-glycero-3-phosphate + choline + H(+). Hydrolyzes glycerol-phospholipids at the terminal phosphodiesteric bond to generate phosphatidic acids (PA). Promotes growth and plays a role in nitrogen signaling. The protein is Phospholipase D alpha 4 of Arabidopsis thaliana (Mouse-ear cress).